The following is a 206-amino-acid chain: Large ribosomal subunit protein uL4 (206 aa).

Residues 63–97 (MYKQKGTGRARHHSARAPQFRGGGKAHGPVVRSHE) are disordered. Residues 64 to 77 (YKQKGTGRARHHSA) show a composition bias toward basic residues.

This sequence belongs to the universal ribosomal protein uL4 family. Part of the 50S ribosomal subunit.

In terms of biological role, one of the primary rRNA binding proteins, this protein initially binds near the 5'-end of the 23S rRNA. It is important during the early stages of 50S assembly. It makes multiple contacts with different domains of the 23S rRNA in the assembled 50S subunit and ribosome. Forms part of the polypeptide exit tunnel. This Rhizobium etli (strain ATCC 51251 / DSM 11541 / JCM 21823 / NBRC 15573 / CFN 42) protein is Large ribosomal subunit protein uL4.